The following is a 372-amino-acid chain: Glutamate 5-kinase (372 aa).

Lys14 provides a ligand contact to ATP. Residues Ser54, Asp141, and Asn153 each contribute to the substrate site. 173-174 (TD) is a binding site for ATP. A PUA domain is found at 280–358 (RGTLVLDDGA…DAIVGLLGYM (79 aa)).

The protein belongs to the glutamate 5-kinase family.

Its subcellular location is the cytoplasm. It catalyses the reaction L-glutamate + ATP = L-glutamyl 5-phosphate + ADP. It participates in amino-acid biosynthesis; L-proline biosynthesis; L-glutamate 5-semialdehyde from L-glutamate: step 1/2. Functionally, catalyzes the transfer of a phosphate group to glutamate to form L-glutamate 5-phosphate. This Pseudomonas fluorescens (strain Pf0-1) protein is Glutamate 5-kinase.